Reading from the N-terminus, the 374-residue chain is Peptide chain release factor 2 (374 aa).

Gln-252 carries the post-translational modification N5-methylglutamine.

It belongs to the prokaryotic/mitochondrial release factor family. Methylated by PrmC. Methylation increases the termination efficiency of RF2.

The protein resides in the cytoplasm. In terms of biological role, peptide chain release factor 2 directs the termination of translation in response to the peptide chain termination codons UGA and UAA. The polypeptide is Peptide chain release factor 2 (Stenotrophomonas maltophilia (strain R551-3)).